Here is an 802-residue protein sequence, read N- to C-terminus: LPS-assembly protein LptD (802 aa).

An N-terminal signal peptide occupies residues 1 to 25; it reads MARLFSLKPLVLALGLCFGTHCAAA.

Belongs to the LptD family. Component of the lipopolysaccharide transport and assembly complex. Interacts with LptE and LptA.

It is found in the cell outer membrane. Together with LptE, is involved in the assembly of lipopolysaccharide (LPS) at the surface of the outer membrane. This chain is LPS-assembly protein LptD, found in Neisseria meningitidis serogroup B (strain ATCC BAA-335 / MC58).